Consider the following 208-residue polypeptide: FMN-dependent NADH:quinone oxidoreductase (208 aa).

FMN-binding positions include 17 to 19 (SNS), 99 to 102 (MWNL), and 143 to 146 (SRGG).

The protein belongs to the azoreductase type 1 family. As to quaternary structure, homodimer. Requires FMN as cofactor.

The enzyme catalyses 2 a quinone + NADH + H(+) = 2 a 1,4-benzosemiquinone + NAD(+). The catalysed reaction is N,N-dimethyl-1,4-phenylenediamine + anthranilate + 2 NAD(+) = 2-(4-dimethylaminophenyl)diazenylbenzoate + 2 NADH + 2 H(+). Quinone reductase that provides resistance to thiol-specific stress caused by electrophilic quinones. Its function is as follows. Also exhibits azoreductase activity. Catalyzes the reductive cleavage of the azo bond in aromatic azo compounds to the corresponding amines. The polypeptide is FMN-dependent NADH:quinone oxidoreductase (Staphylococcus carnosus (strain TM300)).